The chain runs to 977 residues: Collagen alpha-2(I) chain (977 aa).

A disordered region spans residues 1 to 977; that stretch reads SGGFDFSFLP…RGSQGSQGPS (977 aa). Proline 10, proline 13, proline 28, and proline 34 each carry 4-hydroxyproline. Residues 17–66 are compositionally biased toward low complexity; that stretch reads GPMGLMGPRGPPGASGAPGPQGFQGPAGEPGEPGQTGPAGARGPAGPPGK. 5-hydroxylysine; alternate is present on lysine 91. Residue lysine 91 is glycosylated (O-linked (Gal...) hydroxylysine; alternate). Composition is skewed to low complexity over residues 138-159 and 205-226; these read SRGS…SAGP and PGAN…AGAP. The segment covering 258–267 has biased composition (gly residues); that stretch reads GESGGKGEPG. Residues 268-278 are compositionally biased toward low complexity; sequence SAGPQGPPGSS. Over residues 300–309 the composition is skewed to gly residues; the sequence is GLRGGPGSRG. A compositionally biased stretch (low complexity) spans 322–338; the sequence is PAGARGASGPAGVRGPS. 4-hydroxyproline is present on residues proline 344 and proline 347. The segment covering 373-392 has biased composition (low complexity); the sequence is LPGIDGRPGPIGPAGARGEA. Positions 441 to 450 are enriched in gly residues; that stretch reads GVQGGKGEQG. Composition is skewed to low complexity over residues 497–514 and 526–536; these read SGES…SRGP and EPGVVGAPGTA. The segment covering 537–546 has biased composition (gly residues); that stretch reads GPAGSGGLPG. Composition is skewed to low complexity over residues 569–605 and 620–640; these read VGTT…AGPA and VGPA…QPGA. Basic and acidic residues predominate over residues 641-650; sequence KGERGTKGPK. The segment covering 658–668 has biased composition (low complexity); the sequence is PTGPVGSAGPA. A compositionally biased stretch (gly residues) spans 678–687; sequence GSRGDGGPPG. Residues 689-698 show a composition bias toward low complexity; sequence TGFPGAAGRT. Residues 735–744 are compositionally biased toward gly residues; the sequence is GETGAGGPPG. Low complexity-rich tracts occupy residues 752–779 and 787–797; these read SGEP…LGLP and LPGVAGAVGEP. Gly residues predominate over residues 798–817; that stretch reads GPLGIGPPGARGPSGAGVNG. Low complexity-rich tracts occupy residues 853–871 and 878–898; these read PVGA…PAGK and PGPA…PSGP. Positions 902 to 913 are enriched in basic and acidic residues; that stretch reads RGDKGEAGDKGP.

Belongs to the fibrillar collagen family. Trimers of one alpha 2(I) and two alpha 1(I) chains. Interacts (via C-terminus) with TMEM131 (via PapD-L domain); the interaction is direct and is involved in assembly and TRAPPIII ER-to-Golgi transport complex-dependent secretion of collagen. In terms of processing, prolines at the third position of the tripeptide repeating unit (G-X-Y) are hydroxylated in some or all of the chains. In terms of tissue distribution, expressed in bones.

It is found in the secreted. The protein localises to the extracellular space. The protein resides in the extracellular matrix. Its function is as follows. Type I collagen is a member of group I collagen (fibrillar forming collagen). The protein is Collagen alpha-2(I) chain of Scelidodon sp. (strain SLP-2019) (South American ground sloth).